A 505-amino-acid polypeptide reads, in one-letter code: MKFKLHVNSARQYKDLWNMSDDKPFLCTAPGCGQRFTNEDHLAVHKHKHEMTLKFGPARNDSVIVADQTPTPTRFLKNCEEVGLFNELASPFENEFKKASEDDIKKMPLDLSPLATPIIRSKIEEPSVVETTHQDSPLPHPESTTSDEKEVPLAQTAQPTSAIVRPASLQVPNVLLTSSDSSVIIQQAVPSPTSSTVITQAPSSNRPIVPVPGPFPLLLHLPNGQTMPVAIPASITSSNVHVPAAVPLVRPVTMVPSVPGIPGPSSPQPVQSEAKMRLKAALTQQHPPVTNGDTVKGHGSGLVRTQSEESRPQSLQQPATSTTETPASPAHTTPQTQSTSGRRRRAANEDPDEKRRKFLERNRAAASRCRQKRKVWVQSLEKKAEDLSSLNGQLQSEVTLLRNEVAQLKQLLLAHKDCPVTAMQKKSGYHTADKDDSSEDISVPSSPHTEAIQHSSVSTSNGVSSTSKAEAVATSVLTQMADQSTEPALSQIVMAPSSQSQPSGS.

Positions 1 to 7 (MKFKLHV) match the Nuclear export signal 1 (N-NES) motif. Residues 25–49 (FLCTAPGCGQRFTNEDHLAVHKHKH) form a C2H2-type zinc finger. Thr52 bears the Phosphothreonine; by PKC/PRKCH mark. Ser62 is modified (phosphoserine; by VRK1). Thr69 is subject to Phosphothreonine; by MAPK11 and MAPK14. Residue Thr71 is modified to Phosphothreonine; by MAPK1, MAPK3, MAPK11, MAPK12, MAPK14 and PLK3. Thr73 is modified (phosphothreonine; by VRK1). Phosphoserine occurs at positions 90 and 112. Thr116 carries the post-translational modification Phosphothreonine. Position 121 is a phosphoserine; by PKC/PRKCA and PKC/PRKCB (Ser121). Disordered stretches follow at residues 125–155 (EPSV…PLAQ) and 259–373 (PGIP…RQKR). Ser136 carries the phosphoserine modification. Residues 282–293 (LTQQHPPVTNGD) are compositionally biased toward polar residues. The tract at residues 296–299 (KGHG) is essential for its histone acetyltransferase activity. Low complexity predominate over residues 318–334 (PATSTTETPASPAHTTP). Ser328 is subject to Phosphoserine. Ser340 carries the post-translational modification Phosphoserine; by PKC/PRKCA and PKC/PRKCB. The span at 346-363 (AANEDPDEKRRKFLERNR) shows a compositional bias: basic and acidic residues. Residues 352 to 415 (DEKRRKFLER…AQLKQLLLAH (64 aa)) form the bZIP domain. Residues 354-374 (KRRKFLERNRAAASRCRQKRK) form a basic motif region. Lys357 bears the N6-acetyllysine mark. The residue at position 367 (Ser367) is a Phosphoserine; by PKC/PRKCA and PKC/PRKCB. Position 374 is an N6-acetyllysine (Lys374). The tract at residues 380–408 (LEKKAEDLSSLNGQLQSEVTLLRNEVAQL) is leucine-zipper. The Nuclear export signal 2 (C-NES) motif lies at 405–414 (VAQLKQLLLA). Residues 425–472 (KKSGYHTADKDDSSEDISVPSSPHTEAIQHSSVSTSNGVSSTSKAEAV) form a disordered region. Phosphoserine occurs at positions 442 and 446. Over residues 443 to 454 (VPSSPHTEAIQH) the composition is skewed to polar residues. The span at 455–467 (SSVSTSNGVSSTS) shows a compositional bias: low complexity. 2 positions are modified to phosphoserine; by ATM: Ser490 and Ser498.

It belongs to the bZIP family. ATF subfamily. In terms of assembly, binds DNA as a dimer and can form a homodimer in the absence of DNA. Can form a heterodimer with JUN. Heterodimerization is essential for its transcriptional activity. Interacts with SMAD3 and SMAD4. Binds through its N-terminal region to UTF1 which acts as a coactivator of ATF2 transcriptional activity. Interacts with the HK1/VDAC1 complex. Interacts with NBN, MRE11, XPO1, KAT5 and CUL3. Phosphorylation of Thr-69 by MAPK14 and MAPK11, and at Thr-71 by MAPK1/ERK2, MAPK3/ERK1, MAPK11, MAPK12 and MAPK14 in response to external stimulus like insulin causes increased transcriptional activity. Phosphorylated by PLK3 following hyperosmotic stress. Also phosphorylated and activated by JNK and CaMK4. ATM-mediated phosphorylation at Ser-490 and Ser-498 stimulates its function in DNA damage response. Phosphorylation at Ser-62, Thr-73 and Ser-121 activates its transcriptional activity. Phosphorylation at Thr-69 or Thr-71 enhances acetylation of histones H2B and H4. Ubiquitously expressed, with more abundant expression in the brain.

The protein resides in the nucleus. It localises to the cytoplasm. The protein localises to the mitochondrion outer membrane. In terms of biological role, transcriptional activator which regulates the transcription of various genes, including those involved in anti-apoptosis, cell growth, and DNA damage response. Dependent on its binding partner, binds to CRE (cAMP response element) consensus sequences (5'-TGACGTCA-3') or to AP-1 (activator protein 1) consensus sequences (5'-TGACTCA-3'). In the nucleus, contributes to global transcription and the DNA damage response, in addition to specific transcriptional activities that are related to cell development, proliferation and death. In the cytoplasm, interacts with and perturbs HK1- and VDAC1-containing complexes at the mitochondrial outer membrane, thereby impairing mitochondrial membrane potential, inducing mitochondrial leakage and promoting cell death. The phosphorylated form (mediated by ATM) plays a role in the DNA damage response and is involved in the ionizing radiation (IR)-induced S phase checkpoint control and in the recruitment of the MRN complex into the IR-induced foci (IRIF). Exhibits histone acetyltransferase (HAT) activity which specifically acetylates histones H2B and H4 in vitro. In concert with CUL3 and RBX1, promotes the degradation of KAT5 thereby attenuating its ability to acetylate and activate ATM. Can elicit oncogenic or tumor suppressor activities depending on the tissue or cell type. The polypeptide is Cyclic AMP-dependent transcription factor ATF-2 (ATF2) (Homo sapiens (Human)).